A 130-amino-acid polypeptide reads, in one-letter code: MSELRSELKYLESHEWARVEEDGTVTIGITDHAQEALGDVVFVEVPEVGSQVSIGEEAGVVESVKAASDIYSPVSGEVIAVNEALEDAPETVNSSPYDDGWFFKVKPDDLDELEKALSMEDYKAAIESDD.

The 83-residue stretch at 24–106 (TVTIGITDHA…YDDGWFFKVK (83 aa)) folds into the Lipoyl-binding domain. N6-lipoyllysine is present on Lys-65.

It belongs to the GcvH family. The glycine cleavage system is composed of four proteins: P, T, L and H. (R)-lipoate is required as a cofactor.

In terms of biological role, the glycine cleavage system catalyzes the degradation of glycine. The H protein shuttles the methylamine group of glycine from the P protein to the T protein. The protein is Glycine cleavage system H protein of Saccharophagus degradans (strain 2-40 / ATCC 43961 / DSM 17024).